The chain runs to 544 residues: Serine/threonine-protein kinase bur1 (544 aa).

In terms of domain architecture, Protein kinase spans 25 to 326; sequence FEFLGKLGEG…AIDALKHPYF (302 aa). Residues 31–39 and Lys54 contribute to the ATP site; that span reads LGEGTFGEV. Residue Asp155 is the Proton acceptor of the active site. The interval 357 to 544 is disordered; the sequence is AAMPPAPAGG…ERVDRGPYRR (188 aa). Positions 374 to 403 are enriched in polar residues; it reads GGWSTNSGSRTGAETRNPRISSAARSQGNQ. Composition is skewed to basic and acidic residues over residues 419-438, 456-466, 488-511, and 532-544; these read RGNE…HRDG, HSDKTGRDRGY, DRNR…DKSH, and NYRE…PYRR.

The protein belongs to the protein kinase superfamily. CMGC Ser/Thr protein kinase family. CDC2/CDKX subfamily.

It localises to the nucleus. The catalysed reaction is L-seryl-[protein] + ATP = O-phospho-L-seryl-[protein] + ADP + H(+). It carries out the reaction L-threonyl-[protein] + ATP = O-phospho-L-threonyl-[protein] + ADP + H(+). The enzyme catalyses [DNA-directed RNA polymerase] + ATP = phospho-[DNA-directed RNA polymerase] + ADP + H(+). Its function is as follows. Serine/threonine-protein kinase involved in transcription regulation. Phosphorylates the UBC2/RAD6 ubiquitin-conjugating enzyme (E2), leading to monoubiquitination of histone H2B and the silencing of telomeric-associated genes. Also required for histone H3 methylation. Necessary for the recovery from pheromone-induced growth arrest in the cell cycle G1 phase. In Emericella nidulans (strain FGSC A4 / ATCC 38163 / CBS 112.46 / NRRL 194 / M139) (Aspergillus nidulans), this protein is Serine/threonine-protein kinase bur1 (ptkA).